The primary structure comprises 127 residues: Small ribosomal subunit protein uS13 (127 aa).

A disordered region spans residues 92-127 (HRQGLPVRGQRTRTNARTRRGRRLTVAGKKKAPSKK). Residues 101 to 127 (QRTRTNARTRRGRRLTVAGKKKAPSKK) are compositionally biased toward basic residues.

It belongs to the universal ribosomal protein uS13 family. Part of the 30S ribosomal subunit. Forms a loose heterodimer with protein S19. Forms two bridges to the 50S subunit in the 70S ribosome.

In terms of biological role, located at the top of the head of the 30S subunit, it contacts several helices of the 16S rRNA. In the 70S ribosome it contacts the 23S rRNA (bridge B1a) and protein L5 of the 50S subunit (bridge B1b), connecting the 2 subunits; these bridges are implicated in subunit movement. Contacts the tRNAs in the A and P-sites. In Gloeothece citriformis (strain PCC 7424) (Cyanothece sp. (strain PCC 7424)), this protein is Small ribosomal subunit protein uS13.